The chain runs to 878 residues: Alanine--tRNA ligase (878 aa).

Zn(2+) is bound by residues His-564, His-568, Cys-665, and His-669.

This sequence belongs to the class-II aminoacyl-tRNA synthetase family. The cofactor is Zn(2+).

Its subcellular location is the cytoplasm. It catalyses the reaction tRNA(Ala) + L-alanine + ATP = L-alanyl-tRNA(Ala) + AMP + diphosphate. Catalyzes the attachment of alanine to tRNA(Ala) in a two-step reaction: alanine is first activated by ATP to form Ala-AMP and then transferred to the acceptor end of tRNA(Ala). Also edits incorrectly charged Ser-tRNA(Ala) and Gly-tRNA(Ala) via its editing domain. In Natranaerobius thermophilus (strain ATCC BAA-1301 / DSM 18059 / JW/NM-WN-LF), this protein is Alanine--tRNA ligase.